The primary structure comprises 193 residues: Ribonuclease HII (193 aa).

The 179-residue stretch at 15 to 193 (YIVAGVDEAG…SYHRRSFKSC (179 aa)) folds into the RNase H type-2 domain. A divalent metal cation is bound by residues aspartate 21, glutamate 22, and aspartate 112.

This sequence belongs to the RNase HII family. Mn(2+) serves as cofactor. Mg(2+) is required as a cofactor.

Its subcellular location is the cytoplasm. The enzyme catalyses Endonucleolytic cleavage to 5'-phosphomonoester.. Endonuclease that specifically degrades the RNA of RNA-DNA hybrids. The protein is Ribonuclease HII (rnhB) of Rickettsia prowazekii (strain Madrid E).